The chain runs to 708 residues: Elongation factor G 1 (708 aa).

One can recognise a tr-type G domain in the interval 9–295 (AKVRNIGIMA…AVVRYLPTPL (287 aa)). Residues 18-25 (AHIDAGKT), 86-90 (DTPGH), and 140-143 (NKLD) each bind GTP.

This sequence belongs to the TRAFAC class translation factor GTPase superfamily. Classic translation factor GTPase family. EF-G/EF-2 subfamily.

The protein resides in the cytoplasm. Catalyzes the GTP-dependent ribosomal translocation step during translation elongation. During this step, the ribosome changes from the pre-translocational (PRE) to the post-translocational (POST) state as the newly formed A-site-bound peptidyl-tRNA and P-site-bound deacylated tRNA move to the P and E sites, respectively. Catalyzes the coordinated movement of the two tRNA molecules, the mRNA and conformational changes in the ribosome. This chain is Elongation factor G 1 (fusA), found in Streptomyces coelicolor (strain ATCC BAA-471 / A3(2) / M145).